We begin with the raw amino-acid sequence, 399 residues long: PCI domain-containing protein 2 (399 aa).

The PCI domain occupies 210–391; sequence VTFKYYVGRK…QKLVVSKQNP (182 aa).

The protein belongs to the CSN12 family.

The sequence is that of PCI domain-containing protein 2 (pcid2) from Xenopus laevis (African clawed frog).